The chain runs to 103 residues: Small ribosomal subunit protein uS10 (103 aa).

This sequence belongs to the universal ribosomal protein uS10 family. In terms of assembly, part of the 30S ribosomal subunit.

Its function is as follows. Involved in the binding of tRNA to the ribosomes. This Tolumonas auensis (strain DSM 9187 / NBRC 110442 / TA 4) protein is Small ribosomal subunit protein uS10.